Consider the following 103-residue polypeptide: NADH-quinone oxidoreductase subunit K (103 aa).

3 consecutive transmembrane segments (helical) span residues 1–21 (MIVPLSHVLAVAALLFAVGGV), 29–49 (ILLILIGVEFMLAAAGLAFAG), and 62–82 (AVIIIMGLASAEAGLGLALLV). Positions 84 to 103 (GRRGGGTDRADSYDRLGEES) are disordered. Residues 88–103 (GGTDRADSYDRLGEES) show a composition bias toward basic and acidic residues.

The protein belongs to the complex I subunit 4L family. NDH-1 is composed of 14 different subunits. Subunits NuoA, H, J, K, L, M, N constitute the membrane sector of the complex.

The protein resides in the cell inner membrane. The enzyme catalyses a quinone + NADH + 5 H(+)(in) = a quinol + NAD(+) + 4 H(+)(out). Its function is as follows. NDH-1 shuttles electrons from NADH, via FMN and iron-sulfur (Fe-S) centers, to quinones in the respiratory chain. The immediate electron acceptor for the enzyme in this species is believed to be ubiquinone. Couples the redox reaction to proton translocation (for every two electrons transferred, four hydrogen ions are translocated across the cytoplasmic membrane), and thus conserves the redox energy in a proton gradient. This is NADH-quinone oxidoreductase subunit K from Solidesulfovibrio magneticus (strain ATCC 700980 / DSM 13731 / RS-1) (Desulfovibrio magneticus).